Here is a 109-residue protein sequence, read N- to C-terminus: Protein phosphatase 1 regulatory subunit 1C (109 aa).

The disordered stretch occupies residues 25–109 (AEQIRKRRPT…TNEREEQRDH (85 aa)). Positions 45–54 (NPPEIDDKRV) are enriched in basic and acidic residues. Residues 55–75 (PNTQGELQNASPKQRKQSVYT) show a composition bias toward polar residues. The segment covering 100–109 (TNEREEQRDH) has biased composition (basic and acidic residues).

The protein belongs to the protein phosphatase inhibitor 1 family.

It localises to the cytoplasm. May increase cell susceptibility to TNF-induced apoptosis. This Pongo abelii (Sumatran orangutan) protein is Protein phosphatase 1 regulatory subunit 1C (PPP1R1C).